The primary structure comprises 696 residues: Chitin synthase regulator SKT5 (696 aa).

Disordered regions lie at residues 37-67 (GQDFSDNKENRENRDNEDFSTADLPKRSANQ) and 90-145 (QEED…IKKR). Residues 41 to 53 (SDNKENRENRDNE) show a composition bias toward basic and acidic residues. The segment covering 104-126 (LNNSNNTSLSSLGSTPTNSPSPG) has biased composition (low complexity). Residues 129 to 139 (RQTNSSTSLTK) are compositionally biased toward polar residues. Ser-148 carries the phosphoserine modification. Sel1-like repeat units follow at residues 271–306 (SDAQYLLADGYSSGAFGKIENKEAFVLFQAAAKHGH), 307–342 (IESAYRASHCLEEGLGTTRDSRKSVNFLKFAASRNH), 343–382 (PSAMYKLGLYSFYGRMGLPTDVNTKLNGVKWLSRAAARAN), 386–423 (AAAPYELAKIYHEGFLDVVIPDEKYAMELYIQAASLGH), 424–460 (VPSATLLAQIYETGNDTVGQDTSLSVHYYTQAALKGD), 461–498 (SVAMLGLCAWYLLGAEPAFEKDENEAFQWALRAANAGL), and 499–534 (PKAQFTLGYFYEHGKGCDRNMEYAWKWYEKAAGNED). Ser-561 and Ser-563 each carry phosphoserine. Thr-564 carries the phosphothreonine modification. Composition is skewed to polar residues over residues 576-593 (SNVGSNSRVSSKSETFFT), 605-634 (LQINMNSNTNRNGIKTGSDTSIRKSSSSAK), and 651-661 (VSLSNMGSSNM). Positions 576–696 (SNVGSNSRVS…GKKKKDCVIM (121 aa)) are disordered. Residues 662–675 (IRKDFPAVKTESKK) are compositionally biased toward basic and acidic residues. Positions 680 to 696 (KNKKDKQGKKKKDCVIM) are enriched in basic residues. Cys-693 carries the cysteine methyl ester modification. Cys-693 carries the S-farnesyl cysteine lipid modification. The propeptide at 694 to 696 (VIM) is removed in mature form.

It belongs to the SKT5 family. May interact with CHS3 and seems to be an adapter (along with BNI4) to link CHS3 to septins. In terms of processing, farnesylation is required for chitin synthase CHS3 activity but is not required for SKT5 membrane association.

Its subcellular location is the cell membrane. Its function is as follows. Activator of the chitin synthase CHS3 which polymerizes chitin, a structural polymer of the fungal cell wall. The sequence is that of Chitin synthase regulator SKT5 from Saccharomyces cerevisiae (strain ATCC 204508 / S288c) (Baker's yeast).